Reading from the N-terminus, the 287-residue chain is ATP synthase gamma chain (287 aa).

This sequence belongs to the ATPase gamma chain family. As to quaternary structure, F-type ATPases have 2 components, CF(1) - the catalytic core - and CF(0) - the membrane proton channel. CF(1) has five subunits: alpha(3), beta(3), gamma(1), delta(1), epsilon(1). CF(0) has three main subunits: a, b and c.

The protein resides in the cell inner membrane. In terms of biological role, produces ATP from ADP in the presence of a proton gradient across the membrane. The gamma chain is believed to be important in regulating ATPase activity and the flow of protons through the CF(0) complex. The polypeptide is ATP synthase gamma chain (Citrobacter koseri (strain ATCC BAA-895 / CDC 4225-83 / SGSC4696)).